Reading from the N-terminus, the 576-residue chain is Lysine--tRNA ligase (576 aa).

Residues glutamate 413 and glutamate 420 each coordinate Mg(2+).

Belongs to the class-II aminoacyl-tRNA synthetase family. Homodimer. Requires Mg(2+) as cofactor.

The protein localises to the cytoplasm. It catalyses the reaction tRNA(Lys) + L-lysine + ATP = L-lysyl-tRNA(Lys) + AMP + diphosphate. The polypeptide is Lysine--tRNA ligase (Bacteroides thetaiotaomicron (strain ATCC 29148 / DSM 2079 / JCM 5827 / CCUG 10774 / NCTC 10582 / VPI-5482 / E50)).